Consider the following 200-residue polypeptide: Elongation factor Ts (200 aa).

Positions 80-83 are involved in Mg(2+) ion dislocation from EF-Tu; the sequence is TDFV.

It belongs to the EF-Ts family.

Its subcellular location is the cytoplasm. In terms of biological role, associates with the EF-Tu.GDP complex and induces the exchange of GDP to GTP. It remains bound to the aminoacyl-tRNA.EF-Tu.GTP complex up to the GTP hydrolysis stage on the ribosome. This Caldanaerobacter subterraneus subsp. tengcongensis (strain DSM 15242 / JCM 11007 / NBRC 100824 / MB4) (Thermoanaerobacter tengcongensis) protein is Elongation factor Ts.